Here is a 207-residue protein sequence, read N- to C-terminus: Outer-membrane lipoprotein LolB (207 aa).

The signal sequence occupies residues 1-21 (MPLPDFRLIRLLPLAALVLTA). The N-palmitoyl cysteine moiety is linked to residue cysteine 22. Cysteine 22 carries the S-diacylglycerol cysteine lipid modification.

This sequence belongs to the LolB family. Monomer.

The protein localises to the cell outer membrane. Plays a critical role in the incorporation of lipoproteins in the outer membrane after they are released by the LolA protein. This is Outer-membrane lipoprotein LolB from Shigella dysenteriae serotype 1 (strain Sd197).